Reading from the N-terminus, the 140-residue chain is Cysteine proteinase inhibitor 1 (140 aa).

The first 26 residues, 1–26, serve as a signal peptide directing secretion; the sequence is MRKYRVAGLVAALLVLHSLATPSAQA. Residues 48 to 135 form the Cystatin domain; it reads GGVEPVGNEN…KELQEFKPVD (88 aa). The short motif at 91 to 95 is the Secondary area of contact element; the sequence is QVVAG.

It belongs to the cystatin family. Phytocystatin subfamily.

Its subcellular location is the secreted. Functionally, there are two distinct cystatins in rice seeds (Oryzacystatin-1 and -2) with different specificities against cysteine proteinases. May be involved in the control of germination by inhibition of endogenous cysteine proteinases. May play a role in defense by inhibiting exogenous proteases such as those present in digestive tracks of insects and nematodes. The chain is Cysteine proteinase inhibitor 1 from Oryza sativa subsp. japonica (Rice).